A 125-amino-acid polypeptide reads, in one-letter code: Small ribosomal subunit protein uS12 (125 aa).

D89 is modified (3-methylthioaspartic acid).

This sequence belongs to the universal ribosomal protein uS12 family. Part of the 30S ribosomal subunit. Contacts proteins S8 and S17. May interact with IF1 in the 30S initiation complex.

With S4 and S5 plays an important role in translational accuracy. Functionally, interacts with and stabilizes bases of the 16S rRNA that are involved in tRNA selection in the A site and with the mRNA backbone. Located at the interface of the 30S and 50S subunits, it traverses the body of the 30S subunit contacting proteins on the other side and probably holding the rRNA structure together. The combined cluster of proteins S8, S12 and S17 appears to hold together the shoulder and platform of the 30S subunit. This is Small ribosomal subunit protein uS12 from Bordetella avium (strain 197N).